The chain runs to 591 residues: L-gulonolactone oxidase 2 (591 aa).

The N-terminal stretch at 1–27 (MAFTFPPSYRTLVGLYYIFTLMHTAVS) is a signal peptide. Positions 56–238 (STCRAANVAY…SQVTFELQPM (183 aa)) constitute an FAD-binding PCMH-type domain.

This sequence belongs to the oxygen-dependent FAD-linked oxidoreductase family. FAD serves as cofactor.

It carries out the reaction L-gulono-1,4-lactone + O2 = L-ascorbate + H2O2 + H(+). It functions in the pathway cofactor biosynthesis; L-ascorbate biosynthesis. Functionally, catalyzes the oxidation of L-gulono-1,4-lactone to ascorbic acid. L-gulono-1,4-lactone is oxidized to hydrogen peroxide and L-xylo-hexulonolactone which spontaneously isomerizes to L-ascorbate. The chain is L-gulonolactone oxidase 2 from Arabidopsis thaliana (Mouse-ear cress).